The following is a 638-amino-acid chain: LIM domain kinase 2 (638 aa).

LIM zinc-binding domains follow at residues 12–63 (CPGC…CPKD) and 72–124 (CHGC…CGKC). Residues 152-239 (LISMPATTEG…TLQLLIEHDP (88 aa)) form the PDZ domain. Position 210 is a phosphothreonine (T210). A disordered region spans residues 279–304 (LRRRSLRRSNSISKSPGPSSPKEPLL). Residues 286–302 (RSNSISKSPGPSSPKEP) show a composition bias toward low complexity. Phosphoserine occurs at positions 293 and 298. The region spanning 331–608 (LIHGEVLGKG…DSFEALSLYL (278 aa)) is the Protein kinase domain. Residues 337–345 (LGKGFFGQA) and K360 each bind ATP. The active site involves D451. At T505 the chain carries Phosphothreonine; by ROCK1 and CDC42BP.

The protein belongs to the protein kinase superfamily. TKL Ser/Thr protein kinase family. As to quaternary structure, interacts with LIMK2b. In terms of assembly, interacts with LIMK2a. Binds ROCK1 and MARF1. Interacts with NISCH. Post-translationally, phosphorylated on serine and/or threonine residues by ROCK1.

Its subcellular location is the cytoplasm. It is found in the cytoskeleton. The protein localises to the spindle. The protein resides in the microtubule organizing center. It localises to the centrosome. Its subcellular location is the nucleus. It is found in the perinuclear region. The enzyme catalyses L-seryl-[protein] + ATP = O-phospho-L-seryl-[protein] + ADP + H(+). It carries out the reaction L-threonyl-[protein] + ATP = O-phospho-L-threonyl-[protein] + ADP + H(+). Serine/threonine-protein kinase that plays an essential role in the regulation of actin filament dynamics. Acts downstream of several Rho family GTPase signal transduction pathways. Involved in astral microtubule organization and mitotic spindle orientation during early stages of mitosis by mediating phosphorylation of TPPP. Displays serine/threonine-specific phosphorylation of myelin basic protein and histone (MBP) in vitro. Suppresses ciliogenesis via multiple pathways; phosphorylation of CFL1, suppression of directional trafficking of ciliary vesicles to the ciliary base, and by facilitating YAP1 nuclear localization where it acts as a transcriptional corepressor of the TEAD4 target genes AURKA and PLK1. The chain is LIM domain kinase 2 (LIMK2) from Homo sapiens (Human).